The sequence spans 340 residues: UDP-glucose 4-epimerase (340 aa).

Residues 16–17 (YI), 37–42 (IDNNKN), 60–61 (DL), 82–86 (FAAKT), S127, Y154, K158, and F182 each bind NAD(+). 2 residues coordinate substrate: S127 and Y154. Y154 functions as the Proton acceptor in the catalytic mechanism. Substrate is bound by residues N183, 199-200 (TL), 216-218 (FLY), R231, and 295-298 (RSWD).

This sequence belongs to the NAD(P)-dependent epimerase/dehydratase family. In terms of assembly, homodimer. It depends on NAD(+) as a cofactor.

It carries out the reaction UDP-alpha-D-glucose = UDP-alpha-D-galactose. Its pathway is carbohydrate metabolism; galactose metabolism. Involved in the metabolism of galactose. Catalyzes the conversion of UDP-galactose (UDP-Gal) to UDP-glucose (UDP-Glc) through a mechanism involving the transient reduction of NAD. This Mycoplasma genitalium (strain ATCC 33530 / DSM 19775 / NCTC 10195 / G37) (Mycoplasmoides genitalium) protein is UDP-glucose 4-epimerase (galE).